Reading from the N-terminus, the 173-residue chain is Myosin light chain 5 (173 aa).

The disordered stretch occupies residues 1-22 (MASRKTKKKEGGGLRAQRASSN). EF-hand domains are found at residues 30 to 65 (TQIQ…LGKT), 100 to 135 (DAEE…QADK), and 136 to 171 (MTAE…GEEK). Ca(2+) contacts are provided by D43, N45, D47, and D54.

As to quaternary structure, myosin is a hexamer of 2 heavy chains and 4 light chains. As to expression, jaw-closing muscles.

This Felis catus (Cat) protein is Myosin light chain 5 (MYL5).